Here is a 174-residue protein sequence, read N- to C-terminus: Dual-action ribosomal maturation protein DarP (174 aa).

It belongs to the DarP family.

The protein resides in the cytoplasm. In terms of biological role, member of a network of 50S ribosomal subunit biogenesis factors which assembles along the 30S-50S interface, preventing incorrect 23S rRNA structures from forming. Promotes peptidyl transferase center (PTC) maturation. The protein is Dual-action ribosomal maturation protein DarP of Vibrio campbellii (strain ATCC BAA-1116).